The primary structure comprises 454 residues: Protein disulfide-isomerase TMX3 (454 aa).

The signal sequence occupies residues 1-24 (MAAWKSWTALRLCATVVVLDMVVC). The 104-residue stretch at 25–128 (KGFVEDLDES…KDDIIEFAHR (104 aa)) folds into the Thioredoxin domain. Over 25–375 (KGFVEDLDES…TIVSIFKSSP (351 aa)) the chain is Lumenal. Residues Cys-53 and Cys-56 each act as nucleophile in the active site. Cys-53 and Cys-56 are disulfide-bonded. Residues Asn-258 and Asn-313 are each glycosylated (N-linked (GlcNAc...) asparagine). Residues 376 to 396 (LMGCFLFGLPLGVISIMCYGI) traverse the membrane as a helical segment. The Cytoplasmic segment spans residues 397–454 (YTADTDGGYIEERYEVSKSENENQEQIEESKEQQEPSSGGSVVPTVQEPKDVLEKKKD). The segment at 412 to 454 (VSKSENENQEQIEESKEQQEPSSGGSVVPTVQEPKDVLEKKKD) is disordered. Basic and acidic residues predominate over residues 444-454 (EPKDVLEKKKD). The Di-lysine motif motif lies at 451 to 454 (KKKD).

This sequence belongs to the protein disulfide isomerase family. N-glycosylated. Widely expressed. Expressed in brain, testis, lung, skin, kidney, uterus, bone, stomach, liver, prostate, placenta, eye and muscle.

It is found in the endoplasmic reticulum membrane. It catalyses the reaction Catalyzes the rearrangement of -S-S- bonds in proteins.. Probable disulfide isomerase, which participates in the folding of proteins containing disulfide bonds. May act as a dithiol oxidase. Acts as a regulator of endoplasmic reticulum-mitochondria contact sites via its ability to regulate redox signals. The chain is Protein disulfide-isomerase TMX3 (TMX3) from Homo sapiens (Human).